The primary structure comprises 170 residues: Bifunctional protein PyrR (170 aa).

The short motif at 90–102 (LVLIDDVLMSGRT) is the PRPP-binding element.

This sequence belongs to the purine/pyrimidine phosphoribosyltransferase family. PyrR subfamily.

The enzyme catalyses UMP + diphosphate = 5-phospho-alpha-D-ribose 1-diphosphate + uracil. Functionally, regulates the transcription of the pyrimidine nucleotide (pyr) operon in response to exogenous pyrimidines. Also displays a weak uracil phosphoribosyltransferase activity which is not physiologically significant. The chain is Bifunctional protein PyrR from Pseudomonas savastanoi pv. phaseolicola (strain 1448A / Race 6) (Pseudomonas syringae pv. phaseolicola (strain 1448A / Race 6)).